A 178-amino-acid polypeptide reads, in one-letter code: Interleukin-10 (178 aa).

The N-terminal stretch at 1–18 (MHSSALLCCLVLLTGVRA) is a signal peptide. 2 disulfide bridges follow: C30–C126 and C80–C132. A glycan (N-linked (GlcNAc...) asparagine) is linked at N134.

This sequence belongs to the IL-10 family. In terms of assembly, homodimer. Interacts with IL10RA and IL10RB.

It localises to the secreted. Major immune regulatory cytokine that acts on many cells of the immune system where it has profound anti-inflammatory functions, limiting excessive tissue disruption caused by inflammation. Mechanistically, IL10 binds to its heterotetrameric receptor comprising IL10RA and IL10RB leading to JAK1 and STAT2-mediated phosphorylation of STAT3. In turn, STAT3 translocates to the nucleus where it drives expression of anti-inflammatory mediators. Targets antigen-presenting cells (APCs) such as macrophages and monocytes and inhibits their release of pro-inflammatory cytokines including granulocyte-macrophage colony-stimulating factor /GM-CSF, granulocyte colony-stimulating factor/G-CSF, IL-1 alpha, IL-1 beta, IL-6, IL-8 and TNF-alpha. Also interferes with antigen presentation by reducing the expression of MHC-class II and co-stimulatory molecules, thereby inhibiting their ability to induce T cell activation. In addition, controls the inflammatory response of macrophages by reprogramming essential metabolic pathways including mTOR signaling. In Cercocebus atys (Sooty mangabey), this protein is Interleukin-10 (IL10).